The chain runs to 297 residues: Inactive beta selinene synthase (297 aa).

The protein belongs to the terpene synthase family. As to quaternary structure, monomer.

The protein localises to the cytoplasm. Functionally, inactive selinene synthase. The sequence is that of Inactive beta selinene synthase from Zea mays (Maize).